Here is a 386-residue protein sequence, read N- to C-terminus: S-adenosylmethionine synthase (386 aa).

An ATP-binding site is contributed by H16. D18 provides a ligand contact to Mg(2+). E44 is a K(+) binding site. 2 residues coordinate L-methionine: E57 and Q100. Positions 100–110 (QSRDIAQGVDR) are flexible loop. ATP-binding positions include 165 to 167 (DAK), D240, 246 to 247 (RK), A263, and K267. D240 serves as a coordination point for L-methionine. Position 271 (K271) interacts with L-methionine.

The protein belongs to the AdoMet synthase family. As to quaternary structure, homotetramer; dimer of dimers. Mg(2+) is required as a cofactor. The cofactor is K(+).

It is found in the cytoplasm. It catalyses the reaction L-methionine + ATP + H2O = S-adenosyl-L-methionine + phosphate + diphosphate. Its pathway is amino-acid biosynthesis; S-adenosyl-L-methionine biosynthesis; S-adenosyl-L-methionine from L-methionine: step 1/1. Catalyzes the formation of S-adenosylmethionine (AdoMet) from methionine and ATP. The overall synthetic reaction is composed of two sequential steps, AdoMet formation and the subsequent tripolyphosphate hydrolysis which occurs prior to release of AdoMet from the enzyme. The protein is S-adenosylmethionine synthase of Francisella tularensis subsp. holarctica (strain FTNF002-00 / FTA).